A 347-amino-acid chain; its full sequence is Protein-glutamate methylesterase/protein-glutamine glutaminase 1 (347 aa).

Residues 6-123 form the Response regulatory domain; that stretch reads RVLVVDDSAT…LRPFGDLAEK (118 aa). At Asp57 the chain carries 4-aspartylphosphate. One can recognise a CheB-type methylesterase domain in the interval 150 to 342; the sequence is FRVGRKIVAI…EEILKMTAAR (193 aa). Residues Ser162, His188, and Asp284 contribute to the active site.

Belongs to the CheB family. In terms of processing, phosphorylated by CheA. Phosphorylation of the N-terminal regulatory domain activates the methylesterase activity.

It is found in the cytoplasm. The enzyme catalyses [protein]-L-glutamate 5-O-methyl ester + H2O = L-glutamyl-[protein] + methanol + H(+). It catalyses the reaction L-glutaminyl-[protein] + H2O = L-glutamyl-[protein] + NH4(+). Functionally, involved in chemotaxis. Part of a chemotaxis signal transduction system that modulates chemotaxis in response to various stimuli. Catalyzes the demethylation of specific methylglutamate residues introduced into the chemoreceptors (methyl-accepting chemotaxis proteins or MCP) by CheR. Also mediates the irreversible deamidation of specific glutamine residues to glutamic acid. This chain is Protein-glutamate methylesterase/protein-glutamine glutaminase 1, found in Rhizobium johnstonii (strain DSM 114642 / LMG 32736 / 3841) (Rhizobium leguminosarum bv. viciae).